The following is a 617-amino-acid chain: Vacuolar protein sorting-associated protein 33B (617 aa).

This sequence belongs to the STXBP/unc-18/SEC1 family. As to quaternary structure, interacts with vipas39. Widely expressed from 4 hours post-fertilization (hpf) to 24 hpf. At 48 hpf, localized to brain, retina, ear, liver and proximal intestine. This expression pattern is more pronounced at 72 hpf and persists through 5 days post-fertilization (dpf). At 3 dpf and 4 dpf, expression in the liver is predominantly in developing biliary epithelial cells. No expression detected in kidney or spinal cord.

Its subcellular location is the late endosome membrane. The protein resides in the lysosome membrane. In terms of biological role, may play a role in vesicle-mediated protein trafficking to lysosomal compartments and in membrane docking/fusion reactions of late endosomes/lysosomes. Required for proper trafficking and targeting of the collagen-modifying enzyme lysyl hydroxylase 3 (LH3) to intracellular collagen. Mediates phagolysosomal fusion in macrophages. Proposed to be involved in endosomal maturation implicating vipas39. In epithelial cells, the vps33b:vipas39 complex may play a role in the apical recycling pathway and in the maintenance of the apical-basolateral polarity. Plays a role in bile duct development. This chain is Vacuolar protein sorting-associated protein 33B, found in Danio rerio (Zebrafish).